A 226-amino-acid polypeptide reads, in one-letter code: ATP synthase F(0) complex subunit a (226 aa).

6 helical membrane passes run 12 to 32 (PTILGLPAAVPIILFPSLLIP), 68 to 88 (WSLMLISLITFIATTNLLGLL), 97 to 117 (QLSMNLAMAIPLWAGTVATGF), 138 to 158 (IPMLIIIETISLFIQPVALAV), 164 to 184 (ITAGHLLMHLIGAATMALSTI), and 200 to 222 (TTLEIAVALIQAYVFTLLVSLYL).

This sequence belongs to the ATPase A chain family. As to quaternary structure, component of the ATP synthase complex composed at least of ATP5F1A/subunit alpha, ATP5F1B/subunit beta, ATP5MC1/subunit c (homooctomer), MT-ATP6/subunit a, MT-ATP8/subunit 8, ATP5ME/subunit e, ATP5MF/subunit f, ATP5MG/subunit g, ATP5MK/subunit k, ATP5MJ/subunit j, ATP5F1C/subunit gamma, ATP5F1D/subunit delta, ATP5F1E/subunit epsilon, ATP5PF/subunit F6, ATP5PB/subunit b, ATP5PD/subunit d, ATP5PO/subunit OSCP. ATP synthase complex consists of a soluble F(1) head domain (subunits alpha(3) and beta(3)) - the catalytic core - and a membrane F(0) domain - the membrane proton channel (subunits c, a, 8, e, f, g, k and j). These two domains are linked by a central stalk (subunits gamma, delta, and epsilon) rotating inside the F1 region and a stationary peripheral stalk (subunits F6, b, d, and OSCP). Interacts with DNAJC30; interaction is direct.

Its subcellular location is the mitochondrion inner membrane. It carries out the reaction H(+)(in) = H(+)(out). In terms of biological role, subunit a, of the mitochondrial membrane ATP synthase complex (F(1)F(0) ATP synthase or Complex V) that produces ATP from ADP in the presence of a proton gradient across the membrane which is generated by electron transport complexes of the respiratory chain. ATP synthase complex consist of a soluble F(1) head domain - the catalytic core - and a membrane F(1) domain - the membrane proton channel. These two domains are linked by a central stalk rotating inside the F(1) region and a stationary peripheral stalk. During catalysis, ATP synthesis in the catalytic domain of F(1) is coupled via a rotary mechanism of the central stalk subunits to proton translocation. With the subunit c (ATP5MC1), forms the proton-conducting channel in the F(0) domain, that contains two crucial half-channels (inlet and outlet) that facilitate proton movement from the mitochondrial intermembrane space (IMS) into the matrix. Protons are taken up via the inlet half-channel and released through the outlet half-channel, following a Grotthuss mechanism. This is ATP synthase F(0) complex subunit a from Hylobates lar (Lar gibbon).